Reading from the N-terminus, the 344-residue chain is L-rhamnose-proton symporter (344 aa).

10 helical membrane-spanning segments follow: residues 4–24 (AITMGIFWHLIGAASAACFYA), 38–58 (WSVGGIVSWLILPWTISALLL), 68–88 (FNLSTLLPVFLFGAMWGIGNI), 101–121 (MGIGIAIGITLIVGTLMTPII), 137–157 (TLLGVFVALIGVGIVTRAGQL), 175–195 (LLLAVMCGIFSAGMSFAMNAA), 214–234 (LPSYVVIMGGGALVNLGFCFI), 259–279 (ILLSALGGLMWYLQFFFYAWG), 290–310 (MSWMLHMSFYVLCGGLVGLVL), and 321–341 (VAVLSLGCVVIIIAANIVGLG).

This sequence belongs to the L-rhamnose transporter (TC 2.A.7.6) family.

The protein localises to the cell inner membrane. It catalyses the reaction L-rhamnopyranose(in) + H(+)(in) = L-rhamnopyranose(out) + H(+)(out). Its function is as follows. Uptake of L-rhamnose across the cytoplasmic membrane with the concomitant transport of protons into the cell (symport system). In Salmonella agona (strain SL483), this protein is L-rhamnose-proton symporter.